A 735-amino-acid polypeptide reads, in one-letter code: Transcription factor RFX4 (735 aa).

Positions 25 to 59 (SESKRFSSHSSIGNISNDENEEKENNRASKPHSTP) are disordered. A DNA-binding region spans residues 44–126 (NEEKENNRAS…RRLGTRGQSK (83 aa)). Residues 61–136 (TLQWLEENYE…YHYYGIAVKE (76 aa)) constitute a DNA-binding region (RFX-type winged-helix). The tract at residues 315-487 (RFSQILKRQT…NELMRAMKGE (173 aa)) is necessary for dimerization.

This sequence belongs to the RFX family.

Its subcellular location is the nucleus. Its function is as follows. May activate transcription by interacting directly with the X-box. In Danio rerio (Zebrafish), this protein is Transcription factor RFX4 (rfx4).